Consider the following 497-residue polypeptide: MELVVKSVAAVSVKTATLVVPVGEGRKLGATAKAVDLASEGAISAVLKRGDLAGKPGQTLLLHSVPGLKAERVLLVGSGKDEALGDRAWRKLAASVAGVLKGLGGSDAVLALDDIAVTGRDGHYGKYRLLAETLLDSDYVFDRYKSQKAEPRALKKITLLADKAGLAEAERAVKHASAIATGMAFTRDLGNLPPNVCHPSFLAEQAKGLGKAHKGLKVEVLDEKKIKELGMGAFYAVGQGSDQPPRLIVLNYQGGKKSEKPFVLVGKGITFDTGGISLKPGAGMDEMKYDMCGAASVFGTLRAVLELQLPINLVCLLACAENMPSGGATRPGDIVTTMSGQTVEILNTDAEGRLVLCDTLTYAERFKPQAVIDIATLTGACIVALGSHTSGLMGNNDELVGQLLDAGKRADDRAWQLPLFDEYQEQLDSPFADIANIGGPKAGTITAGCFLSRFAKAYNWAHLDIAGTAWISGGKDKGASGRPVPLLTQYLLDRAGA.

Mn(2+) contacts are provided by lysine 267 and aspartate 272. The active site involves lysine 279. The Mn(2+) site is built by aspartate 290, aspartate 349, and glutamate 351. Arginine 353 is a catalytic residue.

This sequence belongs to the peptidase M17 family. Mn(2+) serves as cofactor.

The protein localises to the cytoplasm. The enzyme catalyses Release of an N-terminal amino acid, Xaa-|-Yaa-, in which Xaa is preferably Leu, but may be other amino acids including Pro although not Arg or Lys, and Yaa may be Pro. Amino acid amides and methyl esters are also readily hydrolyzed, but rates on arylamides are exceedingly low.. It catalyses the reaction Release of an N-terminal amino acid, preferentially leucine, but not glutamic or aspartic acids.. In terms of biological role, presumably involved in the processing and regular turnover of intracellular proteins. Catalyzes the removal of unsubstituted N-terminal amino acids from various peptides. This is Probable cytosol aminopeptidase from Pseudomonas entomophila (strain L48).